The chain runs to 577 residues: MHSTLHNQIAAAAKQTKADLVIQNGKIVNVFTREIIEGDLAIVEGMIVGIGRYEGEKTIDAEGRYICPGLIDGHVHIESSMVPPSEFARVVLPHGVTTVIADPHEIANVAGVCGIQFMLDEAKRTPLDVYMMLPSCVPAASFERAGAVLSAAELAPFFNDERVLGLAEVMDYPSLREQHPSMLDKLALAANANRLIDGHLAGLDADAVNVYRSARIHTDHECVTPDEALERVRRGMYVLIRQGSVAKDLKKLLPAIHEHNARRFLFCTDDKHLDDLWFEGSVDHNVRLAIQAGLDPLLAIQMATLNAAECYRLPTKGAVAPGYDADFLFVDDLETLNITHVFKAGRLVAQHGQTVFPAERSAESLEQPLLHSIRCQAVDETDLRIPMKRGTKAHVIEIIPNHLHTNHLITDVDVQEGAFCPSIERDLLKLVVVERHRGLGIGLGIVRGFGFKAGAIASSIAHDSHHIIAAGTNDRDLTAAIEQLRQQHGGLAVIKDGAVLASLPLEIGGLMTRKDYTEVLSGLKQIDKALKAIGANGSFNPFITLSFLALPVIPELKLTDQGLFDVNKWEFIPVEAV.

This sequence belongs to the metallo-dependent hydrolases superfamily. Adenine deaminase family. Requires Mn(2+) as cofactor.

It catalyses the reaction adenine + H2O + H(+) = hypoxanthine + NH4(+). The chain is Adenine deaminase from Geobacillus kaustophilus (strain HTA426).